A 370-amino-acid polypeptide reads, in one-letter code: Phosphoserine aminotransferase (370 aa).

Residue M1 is modified to N-acetylmethionine. O-phospho-L-serine-binding residues include H44 and R45. Residue K51 is modified to N6-acetyllysine. Pyridoxal 5'-phosphate contacts are provided by G79 and W107. K127 bears the N6-acetyllysine mark. T156, D176, and Q199 together coordinate pyridoxal 5'-phosphate. The residue at position 200 (K200) is an N6-(pyridoxal phosphate)lysine. Positions 241 and 242 each coordinate pyridoxal 5'-phosphate. N6-acetyllysine is present on residues K269, K318, and K323. S331 is subject to Phosphoserine. An N6-acetyllysine modification is found at K333. Residues H335, R336, and R342 each contribute to the O-phospho-L-serine site.

This sequence belongs to the class-V pyridoxal-phosphate-dependent aminotransferase family. SerC subfamily. Homodimer. It depends on pyridoxal 5'-phosphate as a cofactor.

The catalysed reaction is O-phospho-L-serine + 2-oxoglutarate = 3-phosphooxypyruvate + L-glutamate. The protein operates within amino-acid biosynthesis; L-serine biosynthesis; L-serine from 3-phospho-D-glycerate: step 2/3. Involved in L-serine biosynthesis via the phosphorylated pathway, a three-step pathway converting the glycolytic intermediate 3-phospho-D-glycerate into L-serine. Catalyzes the second step, that is the pyridoxal 5'-phosphate-dependent transamination of 3-phosphohydroxypyruvate and L-glutamate to O-phosphoserine (OPS) and alpha-ketoglutarate. In Mus musculus (Mouse), this protein is Phosphoserine aminotransferase.